Reading from the N-terminus, the 366-residue chain is Inactive PGL/p-HBAD biosynthesis glycosyltransferase Mb2982c (366 aa).

2 disordered regions span residues 1–23 and 295–366; these read MEET…PNAA and DGDR…HGGP. The segment covering 295-311 has biased composition (basic and acidic residues); it reads DGDRGHRWPEPPEERAG.

It belongs to the UDP-glycosyltransferase family.

This chain is Inactive PGL/p-HBAD biosynthesis glycosyltransferase Mb2982c, found in Mycobacterium bovis (strain ATCC BAA-935 / AF2122/97).